A 247-amino-acid polypeptide reads, in one-letter code: Carboxy-S-adenosyl-L-methionine synthase (247 aa).

S-adenosyl-L-methionine is bound by residues Tyr-40, 65–67, 90–91, 122–123, Asn-137, and Arg-204; these read GAS, DN, and DI.

Belongs to the class I-like SAM-binding methyltransferase superfamily. Cx-SAM synthase family. As to quaternary structure, homodimer.

The catalysed reaction is prephenate + S-adenosyl-L-methionine = carboxy-S-adenosyl-L-methionine + 3-phenylpyruvate + H2O. Catalyzes the conversion of S-adenosyl-L-methionine (SAM) to carboxy-S-adenosyl-L-methionine (Cx-SAM). This is Carboxy-S-adenosyl-L-methionine synthase from Pseudomonas putida (strain W619).